A 696-amino-acid chain; its full sequence is DNA ligase (696 aa).

Residues 43-47 (DGEFD), 92-93 (SL), and Glu-122 each bind NAD(+). Lys-124 serves as the catalytic N6-AMP-lysine intermediate. NAD(+) contacts are provided by Arg-145, Glu-185, Lys-301, and Lys-325. Zn(2+) is bound by residues Cys-419, Cys-422, Cys-438, and Cys-444. The BRCT domain occupies 608–696 (SIPRNLEGLS…GPDAVAESGV (89 aa)).

The protein belongs to the NAD-dependent DNA ligase family. LigA subfamily. Mg(2+) is required as a cofactor. The cofactor is Mn(2+).

It carries out the reaction NAD(+) + (deoxyribonucleotide)n-3'-hydroxyl + 5'-phospho-(deoxyribonucleotide)m = (deoxyribonucleotide)n+m + AMP + beta-nicotinamide D-nucleotide.. In terms of biological role, DNA ligase that catalyzes the formation of phosphodiester linkages between 5'-phosphoryl and 3'-hydroxyl groups in double-stranded DNA using NAD as a coenzyme and as the energy source for the reaction. It is essential for DNA replication and repair of damaged DNA. The polypeptide is DNA ligase (Rhodococcus jostii (strain RHA1)).